A 353-amino-acid chain; its full sequence is Probable arabinan endo-1,5-alpha-L-arabinosidase B (353 aa).

An N-terminal signal peptide occupies residues 1 to 16 (MVLVATLFSLFTVSLC). Asp-39 acts as the Proton acceptor in catalysis. A glycan (N-linked (GlcNAc...) asparagine) is linked at Asn-194. A disordered region spans residues 202–227 (HLAKHPKTERVNSQDQNPDPLCRDSS). The Proton donor role is filled by Glu-233.

Belongs to the glycosyl hydrolase 43 family.

It is found in the secreted. The enzyme catalyses Endohydrolysis of (1-&gt;5)-alpha-arabinofuranosidic linkages in (1-&gt;5)-arabinans.. The protein operates within glycan metabolism; L-arabinan degradation. In terms of biological role, endo-1,5-alpha-L-arabinanase involved in degradation of pectin. Its preferred substrate is linear 1,5-alpha-L-arabinan. This is Probable arabinan endo-1,5-alpha-L-arabinosidase B (abnB) from Aspergillus oryzae (strain ATCC 42149 / RIB 40) (Yellow koji mold).